Consider the following 504-residue polypeptide: Protein Dok-7 (504 aa).

Positions 4-109 (AALVEGQVKL…WDARIRYALG (106 aa)) constitute a PH domain. The IRS-type PTB domain occupies 105 to 210 (RYALGEVHRF…RGISPTKGPF (106 aa)). Disordered stretches follow at residues 210–229 (FGLR…TVEE), 249–351 (SHAG…YSSS), and 411–483 (LCLA…PHAG). 2 stretches are compositionally biased toward low complexity: residues 263–279 (LSSS…SASS) and 288–310 (SSSS…AGEA). Residues 331 to 341 (GRQSSSDSGIA) show a composition bias toward polar residues.

In terms of assembly, homodimer. Forms a heterotetramer composed of 2 DOK7 and 2 MUSK molecules which facilitates MUSK trans-autophosphorylation on tyrosine residue and activation. Interacts (via IRS-type PTB domain) with MUSK (via cytoplasmic part); requires MUSK phosphorylation. Preferentially expressed in skeletal muscle and heart. Present in thigh muscle, diaphragm and heart but not in the liver or spleen (at protein level).

Its subcellular location is the cell membrane. The protein resides in the synapse. Functionally, probable muscle-intrinsic activator of MUSK that plays an essential role in neuromuscular synaptogenesis. Acts in aneural activation of MUSK and subsequent acetylcholine receptor (AchR) clustering in myotubes. Induces autophosphorylation of MUSK. This is Protein Dok-7 (DOK7) from Homo sapiens (Human).